A 532-amino-acid polypeptide reads, in one-letter code: Flavin-containing monooxygenase 3 (532 aa).

Residues 9–13, Glu32, 40–41, and 61–62 contribute to the FAD site; these read GAGVS, LW, and NS. NADP(+) is bound by residues 60-61 and 195-198; these read TN and SGCD. Ser401 is subject to Phosphoserine. The helical transmembrane segment at 512–532 threads the bilayer; sequence CHLVKLFVLPVLFIAVFLALI.

This sequence belongs to the FMO family. Requires FAD as cofactor.

It is found in the microsome membrane. The protein localises to the endoplasmic reticulum membrane. The enzyme catalyses trimethylamine + NADPH + O2 = trimethylamine N-oxide + NADP(+) + H2O. It carries out the reaction N,N-dimethylaniline + NADPH + O2 + H(+) = N,N-dimethylaniline N-oxide + NADP(+) + H2O. It catalyses the reaction hypotaurine + NADPH + O2 + H(+) = taurine + NADP(+) + H2O. The catalysed reaction is (S)-nicotine + NADPH + O2 = trans-(S)-nicotine N(1')-oxide + NADP(+) + H2O. The enzyme catalyses albendazole + NADPH + O2 + H(+) = albendazole S-oxide + NADP(+) + H2O. In terms of biological role, essential hepatic enzyme that catalyzes the oxygenation of a wide variety of nitrogen- and sulfur-containing compounds including drugs as well as dietary compounds. Plays an important role in the metabolism of trimethylamine (TMA), via the production of trimethylamine N-oxide (TMAO) metabolite. TMA is generated by the action of gut microbiota using dietary precursors such as choline, choline containing compounds, betaine or L-carnitine. By regulating TMAO concentration, FMO3 directly impacts both platelet responsiveness and rate of thrombus formation. The chain is Flavin-containing monooxygenase 3 (FMO3) from Canis lupus familiaris (Dog).